A 228-amino-acid chain; its full sequence is MGITGMTYMFTMVLSLIVLIFSASTVGFDYFQFTQQYQPAVCNSNPTPCNDPTDKLFTVHGLWPSNRNGPDPEKCKTTTMNSQKIGNMTAQLEIIWPNVLNRSDHVGFWEREWLKHGTCGYPTIKDDMHYLKTVIKMYITQKQNVSAILSKATIQPNGNNRSLVDIENAIRSGNNNTKPKFKCQKNTRTTTELVEVTLCSNRDLTKFINCPHGPPKGSRYFCPANVKY.

The signal sequence occupies residues 1–27 (MGITGMTYMFTMVLSLIVLIFSASTVG). Glutamine 36 serves as a coordination point for RNA. A disulfide bridge links cysteine 42 with cysteine 49. Residue histidine 60 participates in RNA binding. Histidine 60 (proton donor) is an active-site residue. Cysteine 75 and cysteine 119 are disulfide-bonded. Asparagine 87 carries an N-linked (GlcNAc) asparagine glycan. An RNA-binding site is contributed by 98 to 99 (NV). Asparagine 101 is a glycosylation site (N-linked (GlcNAc...) asparagine). RNA-binding positions include phenylalanine 108, 111–112 (RE), and 115–116 (KH). Glutamate 112 is a catalytic residue. Residue histidine 116 is the Proton acceptor of the active site. Asparagine 144, asparagine 160, and asparagine 175 each carry an N-linked (GlcNAc...) asparagine glycan. 2 disulfide bridges follow: cysteine 183/cysteine 222 and cysteine 199/cysteine 210.

The protein belongs to the RNase T2 family. The N-glycans attached at Asn-101, Asn-160 and Asn-175 consist predominantly of disaccharide (GlcNAc-GlcNAc). The N-glycan at 87 is 53% monosaccharide and 47% disaccharide. The N-glycan at Asn-144 contains mannose and xylose.

The protein resides in the secreted. It is found in the extracellular space. It carries out the reaction a ribonucleotidyl-ribonucleotide-RNA + H2O = a 3'-end 3'-phospho-ribonucleotide-RNA + a 5'-end dephospho-ribonucleoside-RNA + H(+). In terms of biological role, self-incompatibility (SI) is the inherited ability of a flowering plant to prevent self-fertilization by discriminating between self and non-self pollen during pollination. In many species, self-incompatibility is controlled by the single, multiallelic locus S. This chain is Ribonuclease S-4, found in Pyrus pyrifolia (Chinese pear).